We begin with the raw amino-acid sequence, 283 residues long: DegV domain-containing protein BH3627 (283 aa).

The DegV domain occupies 4–281 (IAIVTDSTAY…EGSIGLSWYI (278 aa)). Thr62 and Ser95 together coordinate hexadecanoate.

In terms of biological role, may bind long-chain fatty acids, such as palmitate, and may play a role in lipid transport or fatty acid metabolism. The chain is DegV domain-containing protein BH3627 from Halalkalibacterium halodurans (strain ATCC BAA-125 / DSM 18197 / FERM 7344 / JCM 9153 / C-125) (Bacillus halodurans).